The chain runs to 214 residues: Cytochrome b (214 aa).

4 consecutive transmembrane segments (helical) span residues 31 to 51 (FGSMLLSCLMIQIATGFFLAI), 75 to 96 (WIMQNTHAIGASLFFICIYIHI), 111 to 131 (WLSGTTLLIILMATAFFGYVL), and 176 to 196 (FFALHFILPFAIISLSSLHIL). Heme b contacts are provided by H81 and H95. Residues H180 and H194 each contribute to the heme b site. H199 is an a ubiquinone binding site.

It belongs to the cytochrome b family. As to quaternary structure, the cytochrome bc1 complex contains 3 respiratory subunits (MT-CYB, CYC1 and UQCRFS1), 2 core proteins (UQCRC1 and UQCRC2) and probably 6 low-molecular weight proteins. Heme b is required as a cofactor.

It is found in the mitochondrion inner membrane. Functionally, component of the ubiquinol-cytochrome c reductase complex (complex III or cytochrome b-c1 complex) that is part of the mitochondrial respiratory chain. The b-c1 complex mediates electron transfer from ubiquinol to cytochrome c. Contributes to the generation of a proton gradient across the mitochondrial membrane that is then used for ATP synthesis. This Crotalus atrox (Western diamondback rattlesnake) protein is Cytochrome b (MT-CYB).